Reading from the N-terminus, the 932-residue chain is Isoleucine--tRNA ligase (932 aa).

The 'HIGH' region signature appears at 57–67; it reads PYANGDIHIGT. Glutamate 559 contributes to the L-isoleucyl-5'-AMP binding site. Residues 600-604 carry the 'KMSKS' region motif; it reads KMSKS. Lysine 603 contributes to the ATP binding site. Residues cysteine 899, cysteine 902, cysteine 919, and cysteine 922 each coordinate Zn(2+).

Belongs to the class-I aminoacyl-tRNA synthetase family. IleS type 1 subfamily. In terms of assembly, monomer. Zn(2+) is required as a cofactor.

The protein localises to the cytoplasm. The enzyme catalyses tRNA(Ile) + L-isoleucine + ATP = L-isoleucyl-tRNA(Ile) + AMP + diphosphate. In terms of biological role, catalyzes the attachment of isoleucine to tRNA(Ile). As IleRS can inadvertently accommodate and process structurally similar amino acids such as valine, to avoid such errors it has two additional distinct tRNA(Ile)-dependent editing activities. One activity is designated as 'pretransfer' editing and involves the hydrolysis of activated Val-AMP. The other activity is designated 'posttransfer' editing and involves deacylation of mischarged Val-tRNA(Ile). The sequence is that of Isoleucine--tRNA ligase from Thermoanaerobacter pseudethanolicus (strain ATCC 33223 / 39E) (Clostridium thermohydrosulfuricum).